A 167-amino-acid chain; its full sequence is Small ribosomal subunit protein uS5 (167 aa).

The S5 DRBM domain maps to 12 to 75 (IEDRVVAINR…ETARKSLIEV (64 aa)).

Belongs to the universal ribosomal protein uS5 family. In terms of assembly, part of the 30S ribosomal subunit. Contacts proteins S4 and S8.

Its function is as follows. With S4 and S12 plays an important role in translational accuracy. Functionally, located at the back of the 30S subunit body where it stabilizes the conformation of the head with respect to the body. The chain is Small ribosomal subunit protein uS5 from Pediococcus pentosaceus (strain ATCC 25745 / CCUG 21536 / LMG 10740 / 183-1w).